The following is a 423-amino-acid chain: LysM domain-containing GPI-anchored protein 3 (423 aa).

The N-terminal stretch at 1-24 is a signal peptide; it reads MKNPEKPLLLFLILASSLASMATA. Cystine bridges form between C31–C97, C37–C160, C95–C158, and C97–C160. Positions 107 to 154 constitute a LysM 1 domain; sequence THYKTRTSDTLGSIADSVYGGLVSPEQIQVANSETDLSVLDVGTKLVI. N162 is a glycosylation site (N-linked (GlcNAc...) asparagine). A LysM 2 domain is found at 173–216; the sequence is LSYVVRGIDTMAGIAKRFSTSVTDLTNVNAMGAPDINPGDILAV. 2 disulfide bridges follow: C221-C253 and C248-C276. Residue N238 is glycosylated (N-linked (GlcNAc...) asparagine). A glycan (N-linked (GlcNAc...) asparagine) is linked at N285. G394 is lipidated: GPI-anchor amidated glycine. Positions 395-423 are cleaved as a propeptide — removed in mature form; the sequence is GSISIASCPLSYYSFIALLIPIGSCFFVF.

As to quaternary structure, interacts with peptidoglycans.

It localises to the cell membrane. Its function is as follows. Required as a cell surface receptor for peptidoglycan (PGN) elicitor signaling leading to innate immunity. Plays an essential role in detecting PGNs and restricting bacterial growth (of Pseudomonas syringae pv. tomato DC3000 for example). The protein is LysM domain-containing GPI-anchored protein 3 (LYM3) of Arabidopsis thaliana (Mouse-ear cress).